Reading from the N-terminus, the 268-residue chain is NAC domain-containing protein 41 (268 aa).

In terms of domain architecture, NAC spans 15 to 160; sequence LPPGFRFHPT…NWVLCRVFLK (146 aa). The DNA-binding element occupies 109 to 166; the sequence is VGMKKTLVFYKGKPPNGTRTNWVLHEYRLVDSQQDSLYGQNMNWVLCRVFLKKRSNSN. Residues 166 to 190 form a disordered region; sequence NSKRKEDEKEEVENEKETETERERE. A compositionally biased stretch (basic and acidic residues) spans 180-190; sequence EKETETERERE.

It is found in the nucleus. Transcription activator of the mannan synthase CSLA9. Recognizes and binds to DNA-specific sequence of CSLA9 promoter. The chain is NAC domain-containing protein 41 from Arabidopsis thaliana (Mouse-ear cress).